We begin with the raw amino-acid sequence, 470 residues long: 3-isopropylmalate dehydratase large subunit (470 aa).

A disordered region spans residues 50 to 121 (NVARGCQHRH…PCGRPGAGRH (72 aa)). [4Fe-4S] cluster-binding residues include C349, C409, and C412.

Belongs to the aconitase/IPM isomerase family. LeuC type 1 subfamily. In terms of assembly, heterodimer of LeuC and LeuD. Requires [4Fe-4S] cluster as cofactor.

The catalysed reaction is (2R,3S)-3-isopropylmalate = (2S)-2-isopropylmalate. It functions in the pathway amino-acid biosynthesis; L-leucine biosynthesis; L-leucine from 3-methyl-2-oxobutanoate: step 2/4. Its function is as follows. Catalyzes the isomerization between 2-isopropylmalate and 3-isopropylmalate, via the formation of 2-isopropylmaleate. The sequence is that of 3-isopropylmalate dehydratase large subunit from Azotobacter vinelandii.